The following is a 483-amino-acid chain: UDP-N-acetylmuramoyl-L-alanyl-D-glutamate--2,6-diaminopimelate ligase (483 aa).

Serine 30 is a UDP-N-acetyl-alpha-D-muramoyl-L-alanyl-D-glutamate binding site. 109–115 (GTNGKTT) lines the ATP pocket. UDP-N-acetyl-alpha-D-muramoyl-L-alanyl-D-glutamate-binding positions include 151-152 (TT), serine 178, and arginine 186. Lysine 218 is subject to N6-carboxylysine. Meso-2,6-diaminopimelate-binding positions include arginine 380, 403–406 (DNPR), glycine 453, and glutamate 457. The Meso-diaminopimelate recognition motif signature appears at 403-406 (DNPR).

This sequence belongs to the MurCDEF family. MurE subfamily. Requires Mg(2+) as cofactor. In terms of processing, carboxylation is probably crucial for Mg(2+) binding and, consequently, for the gamma-phosphate positioning of ATP.

It localises to the cytoplasm. It catalyses the reaction UDP-N-acetyl-alpha-D-muramoyl-L-alanyl-D-glutamate + meso-2,6-diaminopimelate + ATP = UDP-N-acetyl-alpha-D-muramoyl-L-alanyl-gamma-D-glutamyl-meso-2,6-diaminopimelate + ADP + phosphate + H(+). Its pathway is cell wall biogenesis; peptidoglycan biosynthesis. In terms of biological role, catalyzes the addition of meso-diaminopimelic acid to the nucleotide precursor UDP-N-acetylmuramoyl-L-alanyl-D-glutamate (UMAG) in the biosynthesis of bacterial cell-wall peptidoglycan. The polypeptide is UDP-N-acetylmuramoyl-L-alanyl-D-glutamate--2,6-diaminopimelate ligase (Chlamydia pneumoniae (Chlamydophila pneumoniae)).